A 158-amino-acid polypeptide reads, in one-letter code: Crossover junction endodeoxyribonuclease RuvC (158 aa).

Active-site residues include D7, E67, and D140. Mg(2+) contacts are provided by D7, E67, and D140.

Belongs to the RuvC family. In terms of assembly, homodimer which binds Holliday junction (HJ) DNA. The HJ becomes 2-fold symmetrical on binding to RuvC with unstacked arms; it has a different conformation from HJ DNA in complex with RuvA. In the full resolvosome a probable DNA-RuvA(4)-RuvB(12)-RuvC(2) complex forms which resolves the HJ. Mg(2+) is required as a cofactor.

It is found in the cytoplasm. It catalyses the reaction Endonucleolytic cleavage at a junction such as a reciprocal single-stranded crossover between two homologous DNA duplexes (Holliday junction).. Its function is as follows. The RuvA-RuvB-RuvC complex processes Holliday junction (HJ) DNA during genetic recombination and DNA repair. Endonuclease that resolves HJ intermediates. Cleaves cruciform DNA by making single-stranded nicks across the HJ at symmetrical positions within the homologous arms, yielding a 5'-phosphate and a 3'-hydroxyl group; requires a central core of homology in the junction. The consensus cleavage sequence is 5'-(A/T)TT(C/G)-3'. Cleavage occurs on the 3'-side of the TT dinucleotide at the point of strand exchange. HJ branch migration catalyzed by RuvA-RuvB allows RuvC to scan DNA until it finds its consensus sequence, where it cleaves and resolves the cruciform DNA. This is Crossover junction endodeoxyribonuclease RuvC from Dictyoglomus turgidum (strain DSM 6724 / Z-1310).